Reading from the N-terminus, the 176-residue chain is Ribosome maturation factor RimM (176 aa).

A PRC barrel domain is found at 100 to 173 (EGEFHLLDLV…WLRLTPPPGL (74 aa)).

Belongs to the RimM family. As to quaternary structure, binds ribosomal protein uS19.

It localises to the cytoplasm. In terms of biological role, an accessory protein needed during the final step in the assembly of 30S ribosomal subunit, possibly for assembly of the head region. Essential for efficient processing of 16S rRNA. May be needed both before and after RbfA during the maturation of 16S rRNA. It has affinity for free ribosomal 30S subunits but not for 70S ribosomes. This is Ribosome maturation factor RimM from Prochlorococcus marinus (strain MIT 9303).